The primary structure comprises 391 residues: DNA replication and repair protein RecF (391 aa).

Residue glycine 30 to threonine 37 participates in ATP binding.

Belongs to the RecF family.

Its subcellular location is the cytoplasm. The RecF protein is involved in DNA metabolism; it is required for DNA replication and normal SOS inducibility. RecF binds preferentially to single-stranded, linear DNA. It also seems to bind ATP. The chain is DNA replication and repair protein RecF from Saccharopolyspora erythraea (strain ATCC 11635 / DSM 40517 / JCM 4748 / NBRC 13426 / NCIMB 8594 / NRRL 2338).